The sequence spans 168 residues: Group IIF secretory phospholipase A2 (168 aa).

The N-terminal stretch at 1 to 20 (MKKFFAIAVLAGSVVTTAHS) is a signal peptide. Intrachain disulfides connect cysteine 46–cysteine 138, cysteine 48–cysteine 64, cysteine 63–cysteine 120, cysteine 69–cysteine 145, cysteine 70–cysteine 113, cysteine 79–cysteine 106, and cysteine 98–cysteine 111. Ca(2+) is bound by residues tyrosine 47, glycine 49, and glycine 51. The active site involves histidine 67. Aspartate 68 lines the Ca(2+) pocket. 2 N-linked (GlcNAc...) asparagine glycosylation sites follow: asparagine 92 and asparagine 102. The active site involves aspartate 114. A required for localization on the plasma membrane region spans residues 139–168 (QGPTPNCSIYDPYPEEVTCGHGLPATPVST). Asparagine 144 carries an N-linked (GlcNAc...) asparagine glycan.

It belongs to the phospholipase A2 family. It depends on Ca(2+) as a cofactor. As to expression, strongly expressed in testis.

It localises to the secreted. Its subcellular location is the cell membrane. It carries out the reaction a 1,2-diacyl-sn-glycero-3-phosphocholine + H2O = a 1-acyl-sn-glycero-3-phosphocholine + a fatty acid + H(+). The enzyme catalyses 1-hexadecanoyl-2-(9Z-octadecenoyl)-sn-glycero-3-phospho-(1'-sn-glycerol) + H2O = 1-hexadecanoyl-sn-glycero-3-phospho-(1'-sn-glycerol) + (9Z)-octadecenoate + H(+). It catalyses the reaction 1-hexadecanoyl-2-(9Z,12Z-octadecadienoyl)-sn-glycero-3-phosphoethanolamine + H2O = 1-hexadecanoyl-sn-glycero-3-phosphoethanolamine + (9Z,12Z)-octadecadienoate + H(+). The catalysed reaction is 1-hexadecanoyl-2-(5Z,8Z,11Z,14Z-eicosatetraenoyl)-sn-glycero-3-phosphoethanolamine + H2O = 1-hexadecanoyl-sn-glycero-3-phosphoethanolamine + (5Z,8Z,11Z,14Z)-eicosatetraenoate + H(+). It carries out the reaction 1-hexadecanoyl-2-(9Z-octadecenoyl)-sn-glycero-3-phosphocholine + H2O = 1-hexadecanoyl-sn-glycero-3-phosphocholine + (9Z)-octadecenoate + H(+). The enzyme catalyses 1-hexadecanoyl-2-(9Z-octadecenoyl)-sn-glycero-3-phospho-L-serine + H2O = 1-hexadecanoyl-sn-glycero-3-phospho-L-serine + (9Z)-octadecenoate + H(+). Its function is as follows. Secretory calcium-dependent phospholipase A2 that primarily targets extracellular phospholipids. Hydrolyzes the ester bond of the fatty acyl group attached at the sn-2 position of phospholipids (phospholipase A2 activity), the catalytic efficiency decreasing in the following order: phosphatidylglycerols &gt; phosphatidylethanolamines &gt; phosphatidylcholines &gt; phosphatidylserines. May play a role in lipid mediator production in inflammatory conditions, by providing arachidonic acid to downstream cyclooxygenases and lipoxygenases. This Mus musculus (Mouse) protein is Group IIF secretory phospholipase A2 (Pla2g2f).